The primary structure comprises 57 residues: TICHIQISKTHGILKTCEENSCYKMSVRGWIIGRGCGCPSAVRPRQVQCCTSDKCNY.

Disulfide bonds link Cys-3-Cys-22, Cys-17-Cys-36, Cys-38-Cys-49, and Cys-50-Cys-55.

The protein belongs to the three-finger toxin family. Short-chain subfamily. Expressed by the venom gland.

The protein localises to the secreted. Functionally, when tested on muscarinic GPCR, specifically antagonizes the type 2 receptor (CHRM2) subtype (Ki/Kd=120-399 nM). Ex vivo, it reverses the M2R-agonist-induced relaxation in rat and human arteries. In Dendroaspis polylepis polylepis (Black mamba), this protein is Dendroaspis polylepis MT9.